Here is a 376-residue protein sequence, read N- to C-terminus: Dihydroorotate dehydrogenase (quinone) (376 aa).

FMN is bound by residues 78-82 (AGFDK) and T102. Residue K82 participates in substrate binding. 127 to 131 (NRMGF) is a substrate binding site. 2 residues coordinate FMN: N157 and N190. N190 contributes to the substrate binding site. S193 serves as the catalytic Nucleophile. N195 serves as a coordination point for substrate. Positions 228 and 256 each coordinate FMN. A substrate-binding site is contributed by 257 to 258 (NT). Residues G286, G315, and 336 to 337 (YT) contribute to the FMN site.

It belongs to the dihydroorotate dehydrogenase family. Type 2 subfamily. In terms of assembly, monomer. FMN serves as cofactor.

The protein resides in the cell membrane. It catalyses the reaction (S)-dihydroorotate + a quinone = orotate + a quinol. The protein operates within pyrimidine metabolism; UMP biosynthesis via de novo pathway; orotate from (S)-dihydroorotate (quinone route): step 1/1. Functionally, catalyzes the conversion of dihydroorotate to orotate with quinone as electron acceptor. The sequence is that of Dihydroorotate dehydrogenase (quinone) from Trichormus variabilis (strain ATCC 29413 / PCC 7937) (Anabaena variabilis).